Here is a 253-residue protein sequence, read N- to C-terminus: RAD51-associated protein 1 (253 aa).

The interaction with DNA stretch occupies residues 32-51 (APLTKKSRTQPKEPKKENKK). Disordered regions lie at residues 33 to 74 (PLTK…TSLD), 141 to 169 (DREH…EGND), and 184 to 244 (KKIK…WVPP). Positions 154–169 (PDEESEEDSDYREGND) are enriched in acidic residues. The segment covering 184–195 (KKIKRQTRKEKK) has biased composition (basic residues). Residues 190–241 (TRKEKKTPKSENNTTVMELKSEQTQKMMSTSSEPVGRPLYTSSPVTNKKPKW) are interaction with DNA. Polar residues predominate over residues 199-222 (SENNTTVMELKSEQTQKMMSTSSE).

As to quaternary structure, monomer.

It is found in the chromosome. Its subcellular location is the nucleus. In terms of biological role, structure-specific DNA-binding protein involved in DNA repair by promoting RAD51-mediated homologous recombination. Acts by stimulating D-Loop formation by RAD51: specifically enhances joint molecule formation through its structure-specific DNA interaction and its interaction with RAD51. Binds single-stranded DNA (ssDNA), double-stranded DNA (dsDNA) and secondary DNA structures, such as D-loop structures: has a strong preference for branched-DNA structures that are obligatory intermediates during joint molecule formation. Involved in mitotic recombination-dependent replication fork processing. Also involved in meiosis by promoting DMC1-mediated homologous meiotic recombination. This Gallus gallus (Chicken) protein is RAD51-associated protein 1.